A 149-amino-acid chain; its full sequence is VapC ribonuclease PF0355 (149 aa).

Residues 8–122 (TFDSLALIKM…ITDDSKRYEP (115 aa)) enclose the PINc domain. Residues Asp10 and Asp98 each coordinate Mg(2+).

It belongs to the PINc/VapC protein family. Mg(2+) is required as a cofactor.

Its function is as follows. Toxic component of a type II toxin-antitoxin (TA) system. An RNase. The protein is VapC ribonuclease PF0355 of Pyrococcus furiosus (strain ATCC 43587 / DSM 3638 / JCM 8422 / Vc1).